Reading from the N-terminus, the 331-residue chain is Ketol-acid reductoisomerase (NADP(+)) (331 aa).

One can recognise a KARI N-terminal Rossmann domain in the interval 2 to 182; that stretch reads ARMYYDSDAN…GGTRAGILET (181 aa). NADP(+) is bound by residues 25–28, Ser-51, Ser-53, and 83–86; these read YGSQ and DEVQ. Residue His-108 is part of the active site. Gly-134 serves as a coordination point for NADP(+). The KARI C-terminal knotted domain maps to 183 to 328; it reads TFREETETDL…KDLRAMFSWL (146 aa). Mg(2+) contacts are provided by Asp-191, Glu-195, Glu-227, and Glu-231. Ser-252 contributes to the substrate binding site.

Belongs to the ketol-acid reductoisomerase family. The cofactor is Mg(2+).

The enzyme catalyses (2R)-2,3-dihydroxy-3-methylbutanoate + NADP(+) = (2S)-2-acetolactate + NADPH + H(+). It catalyses the reaction (2R,3R)-2,3-dihydroxy-3-methylpentanoate + NADP(+) = (S)-2-ethyl-2-hydroxy-3-oxobutanoate + NADPH + H(+). The protein operates within amino-acid biosynthesis; L-isoleucine biosynthesis; L-isoleucine from 2-oxobutanoate: step 2/4. It functions in the pathway amino-acid biosynthesis; L-valine biosynthesis; L-valine from pyruvate: step 2/4. Functionally, involved in the biosynthesis of branched-chain amino acids (BCAA). Catalyzes an alkyl-migration followed by a ketol-acid reduction of (S)-2-acetolactate (S2AL) to yield (R)-2,3-dihydroxy-isovalerate. In the isomerase reaction, S2AL is rearranged via a Mg-dependent methyl migration to produce 3-hydroxy-3-methyl-2-ketobutyrate (HMKB). In the reductase reaction, this 2-ketoacid undergoes a metal-dependent reduction by NADPH to yield (R)-2,3-dihydroxy-isovalerate. The chain is Ketol-acid reductoisomerase (NADP(+)) from Trichodesmium erythraeum (strain IMS101).